Consider the following 189-residue polypeptide: MVKANYIRAGRLVRILRGPRQNRVGVIVDIVDANRVLVENPCEQKMWRHVQNLKNVEPLKFCVSISRNCSTKALKEALESKKVLEKYAATKVRRPHRAKKAFAESTDFERYQLRVAKRSRAYWARKIFDENDKKNPVSWHKVALKKLLKNAKKVDSTPAAKKRVEKARAARKARLAAGKSKTKVAASKK.

It belongs to the eukaryotic ribosomal protein eL14 family.

Component of the large ribosomal subunit. The ribosome is a large ribonucleoprotein complex responsible for the synthesis of proteins in the cell. This chain is Large ribosomal subunit protein eL14, found in Trypanosoma brucei brucei.